A 440-amino-acid chain; its full sequence is Argininosuccinate lyase (440 aa).

Belongs to the lyase 1 family. Argininosuccinate lyase subfamily.

The protein localises to the cytoplasm. It carries out the reaction 2-(N(omega)-L-arginino)succinate = fumarate + L-arginine. It participates in amino-acid biosynthesis; L-arginine biosynthesis; L-arginine from L-ornithine and carbamoyl phosphate: step 3/3. The sequence is that of Argininosuccinate lyase from Clostridium botulinum (strain Kyoto / Type A2).